Here is a 190-residue protein sequence, read N- to C-terminus: UPF0340 protein BT9727_4999 (190 aa).

It belongs to the UPF0340 family.

This Bacillus thuringiensis subsp. konkukian (strain 97-27) protein is UPF0340 protein BT9727_4999.